The sequence spans 740 residues: Ion-translocating oxidoreductase complex subunit C (740 aa).

4Fe-4S ferredoxin-type domains lie at 369–397 (GEPQ…QQLY) and 407–436 (KATT…VQYF). [4Fe-4S] cluster is bound by residues C377, C380, C383, C387, C416, C419, C422, and C426. The segment at 602–716 (KLEQQQANAE…EPEEQVDPRK (115 aa)) is disordered.

This sequence belongs to the 4Fe4S bacterial-type ferredoxin family. RnfC subfamily. As to quaternary structure, the complex is composed of six subunits: RsxA, RsxB, RsxC, RsxD, RsxE and RsxG. It depends on [4Fe-4S] cluster as a cofactor.

The protein localises to the cell inner membrane. Its function is as follows. Part of a membrane-bound complex that couples electron transfer with translocation of ions across the membrane. Required to maintain the reduced state of SoxR. The protein is Ion-translocating oxidoreductase complex subunit C of Escherichia coli O139:H28 (strain E24377A / ETEC).